We begin with the raw amino-acid sequence, 380 residues long: Large ribosomal subunit protein mL38 (380 aa).

Residues 1-26 (MAAPWWRVVLNGSRNWRGFSTSAALS) constitute a mitochondrion transit peptide. Positions 101–122 (QQLLERKRVLRELRTSVEEERA) form a coiled coil.

This sequence belongs to the phosphatidylethanolamine-binding protein family. Mitochondrion-specific ribosomal protein mL38 subfamily. In terms of assembly, component of the mitochondrial ribosome large subunit (39S) which comprises a 16S rRNA and about 50 distinct proteins.

The protein localises to the mitochondrion. This chain is Large ribosomal subunit protein mL38 (MRPL38), found in Bos taurus (Bovine).